The sequence spans 103 residues: Small ribosomal subunit protein uS10 (103 aa).

It belongs to the universal ribosomal protein uS10 family. As to quaternary structure, part of the 30S ribosomal subunit.

Involved in the binding of tRNA to the ribosomes. This is Small ribosomal subunit protein uS10 from Campylobacter lari (strain RM2100 / D67 / ATCC BAA-1060).